A 276-amino-acid chain; its full sequence is NADPH-dependent 7-cyano-7-deazaguanine reductase (276 aa).

83–85 (IES) lines the substrate pocket. 85–86 (SK) contributes to the NADPH binding site. The active-site Thioimide intermediate is the C184. D191 (proton donor) is an active-site residue. Residue 223-224 (HE) coordinates substrate. 252-253 (RG) is an NADPH binding site.

The protein belongs to the GTP cyclohydrolase I family. QueF type 2 subfamily. Homodimer.

The protein resides in the cytoplasm. It carries out the reaction 7-aminomethyl-7-carbaguanine + 2 NADP(+) = 7-cyano-7-deazaguanine + 2 NADPH + 3 H(+). Its pathway is tRNA modification; tRNA-queuosine biosynthesis. In terms of biological role, catalyzes the NADPH-dependent reduction of 7-cyano-7-deazaguanine (preQ0) to 7-aminomethyl-7-deazaguanine (preQ1). This chain is NADPH-dependent 7-cyano-7-deazaguanine reductase, found in Pseudomonas putida (strain W619).